Reading from the N-terminus, the 408-residue chain is Dual-specificity RNA methyltransferase RlmN (408 aa).

The Proton acceptor role is filled by Glu-122. The Radical SAM core domain maps to 128–369; it reads EEDRGTLCIS…NRAGYASPIR (242 aa). Cys-135 and Cys-380 are joined by a disulfide. 3 residues coordinate [4Fe-4S] cluster: Cys-142, Cys-146, and Cys-149. Residues 206–207, Ser-238, 260–262, and Asn-337 contribute to the S-adenosyl-L-methionine site; these read GE and SLH. Cys-380 (S-methylcysteine intermediate) is an active-site residue.

This sequence belongs to the radical SAM superfamily. RlmN family. [4Fe-4S] cluster serves as cofactor.

The protein localises to the cytoplasm. The enzyme catalyses adenosine(2503) in 23S rRNA + 2 reduced [2Fe-2S]-[ferredoxin] + 2 S-adenosyl-L-methionine = 2-methyladenosine(2503) in 23S rRNA + 5'-deoxyadenosine + L-methionine + 2 oxidized [2Fe-2S]-[ferredoxin] + S-adenosyl-L-homocysteine. It catalyses the reaction adenosine(37) in tRNA + 2 reduced [2Fe-2S]-[ferredoxin] + 2 S-adenosyl-L-methionine = 2-methyladenosine(37) in tRNA + 5'-deoxyadenosine + L-methionine + 2 oxidized [2Fe-2S]-[ferredoxin] + S-adenosyl-L-homocysteine. In terms of biological role, specifically methylates position 2 of adenine 2503 in 23S rRNA and position 2 of adenine 37 in tRNAs. m2A2503 modification seems to play a crucial role in the proofreading step occurring at the peptidyl transferase center and thus would serve to optimize ribosomal fidelity. The sequence is that of Dual-specificity RNA methyltransferase RlmN from Chelativorans sp. (strain BNC1).